Reading from the N-terminus, the 331-residue chain is Protein RecA (331 aa).

Residue 66 to 73 (GPESSGKT) coordinates ATP.

Belongs to the RecA family.

The protein resides in the cytoplasm. In terms of biological role, can catalyze the hydrolysis of ATP in the presence of single-stranded DNA, the ATP-dependent uptake of single-stranded DNA by duplex DNA, and the ATP-dependent hybridization of homologous single-stranded DNAs. It interacts with LexA causing its activation and leading to its autocatalytic cleavage. The chain is Protein RecA from Acholeplasma laidlawii (strain PG-8A).